The following is a 208-amino-acid chain: Interleukin-6 (208 aa).

Residues 1–29 form the signal peptide; that stretch reads MNSRFTSAFTPFAVSLGLLLVMTSAFPTP. The N-linked (GlcNAc...) asparagine glycan is linked to N38. C72 and C78 are joined by a disulfide. The residue at position 81 (S81) is a Phosphoserine. C101 and C111 are disulfide-bonded.

The protein belongs to the IL-6 superfamily. As to quaternary structure, component of a hexamer of two molecules each of IL6, IL6R and IL6ST; first binds to IL6R to associate with the signaling subunit IL6ST. Interacts with IL6R (via the N-terminal ectodomain); this interaction may be affected by IL6R-binding with SORL1, hence decreasing IL6 cis signaling. Interacts with SORL1 (via the N-terminal ectodomain); this interaction leads to IL6 internalization and lysosomal degradation. May form a trimeric complex with the soluble SORL1 ectodomain and soluble IL6R receptor; this interaction might stabilize circulating IL6, hence promoting IL6 trans signaling.

Its subcellular location is the secreted. Its function is as follows. Cytokine with a wide variety of biological functions in immunity, tissue regeneration, and metabolism. Binds to IL6R, then the complex associates to the signaling subunit IL6ST/gp130 to trigger the intracellular IL6-signaling pathway. The interaction with the membrane-bound IL6R and IL6ST stimulates 'classic signaling', whereas the binding of IL6 and soluble IL6R to IL6ST stimulates 'trans-signaling'. Alternatively, 'cluster signaling' occurs when membrane-bound IL6:IL6R complexes on transmitter cells activate IL6ST receptors on neighboring receiver cells. IL6 is a potent inducer of the acute phase response. Rapid production of IL6 contributes to host defense during infection and tissue injury, but excessive IL6 synthesis is involved in disease pathology. In the innate immune response, is synthesized by myeloid cells, such as macrophages and dendritic cells, upon recognition of pathogens through toll-like receptors (TLRs) at the site of infection or tissue injury. In the adaptive immune response, is required for the differentiation of B cells into immunoglobulin-secreting cells. Plays a major role in the differentiation of CD4(+) T cell subsets. Essential factor for the development of T follicular helper (Tfh) cells that are required for the induction of germinal-center formation. Required to drive naive CD4(+) T cells to the Th17 lineage. Also required for proliferation of myeloma cells and the survival of plasmablast cells. Functionally, acts as an essential factor in bone homeostasis and on vessels directly or indirectly by induction of VEGF, resulting in increased angiogenesis activity and vascular permeability. Induces, through 'trans-signaling' and synergistically with IL1B and TNF, the production of VEGF. Involved in metabolic controls, is discharged into the bloodstream after muscle contraction increasing lipolysis and improving insulin resistance. 'Trans-signaling' in central nervous system also regulates energy and glucose homeostasis. Mediates, through GLP-1, crosstalk between insulin-sensitive tissues, intestinal L cells and pancreatic islets to adapt to changes in insulin demand. Also acts as a myokine. Plays a protective role during liver injury, being required for maintenance of tissue regeneration. Also has a pivotal role in iron metabolism by regulating HAMP/hepcidin expression upon inflammation or bacterial infection. Through activation of IL6ST-YAP-NOTCH pathway, induces inflammation-induced epithelial regeneration. This Bubalus bubalis (Domestic water buffalo) protein is Interleukin-6 (IL6).